Reading from the N-terminus, the 88-residue chain is Small ribosomal subunit protein uS17 (88 aa).

Belongs to the universal ribosomal protein uS17 family. In terms of assembly, part of the 30S ribosomal subunit.

In terms of biological role, one of the primary rRNA binding proteins, it binds specifically to the 5'-end of 16S ribosomal RNA. The protein is Small ribosomal subunit protein uS17 of Ruthia magnifica subsp. Calyptogena magnifica.